Reading from the N-terminus, the 215-residue chain is Large ribosomal subunit protein uL1 (215 aa).

It belongs to the universal ribosomal protein uL1 family. Part of the 50S ribosomal subunit.

Binds directly to 23S rRNA. Probably involved in E site tRNA release. Its function is as follows. Protein L1 is also a translational repressor protein, it controls the translation of its operon by binding to its mRNA. In Staphylothermus marinus (strain ATCC 43588 / DSM 3639 / JCM 9404 / F1), this protein is Large ribosomal subunit protein uL1.